The primary structure comprises 598 residues: Probable ATP-dependent RNA helicase DDX52 (598 aa).

K15 carries the N6-acetyllysine modification. S39 carries the post-translational modification Phosphoserine. Positions 59-98 are disordered; sequence CGGLQTQQELQNEETTEGGLLERSKEPKKKKRKKMTADVP. A Q motif motif is present at residues 166–194; that stretch reads QLDQEYKISPRLLQNILDAGFQVPTPIQM. A Helicase ATP-binding domain is found at 197-375; it reads IPVMLHGREL…KLNLDNIVSV (179 aa). 210–217 serves as a coordination point for ATP; sequence APTGSGKT. The short motif at 319–322 is the DEAD box element; that stretch reads DESD. Residues 386-547 enclose the Helicase C-terminal domain; sequence TVEQELLFVG…PVPEYIKGFQ (162 aa). The tract at residues 578–598 is disordered; it reads AKQKKVAGQNSKKKETLKGKS. Residues 589–598 are compositionally biased toward basic and acidic residues; it reads KKKETLKGKS.

This sequence belongs to the DEAD box helicase family. DDX52/ROK1 subfamily.

The protein localises to the nucleus. It is found in the nucleolus. It carries out the reaction ATP + H2O = ADP + phosphate + H(+). In terms of biological role, required for efficient ribosome biogenesis. May control cell cycle progression by regulating translation of mRNAs that contain a terminal oligo pyrimidine (TOP) motif in their 5' UTRs, such as GTPBP4. This chain is Probable ATP-dependent RNA helicase DDX52 (Ddx52), found in Rattus norvegicus (Rat).